The chain runs to 343 residues: Methionine import ATP-binding protein MetN (343 aa).

The ABC transporter domain maps to 2–241; that stretch reads ITLSHITKQF…PKTPLAQAFI (240 aa). 38-45 contacts ATP; sequence GASGAGKS.

The protein belongs to the ABC transporter superfamily. Methionine importer (TC 3.A.1.24) family. The complex is composed of two ATP-binding proteins (MetN), two transmembrane proteins (MetI) and a solute-binding protein (MetQ).

The protein resides in the cell inner membrane. The enzyme catalyses L-methionine(out) + ATP + H2O = L-methionine(in) + ADP + phosphate + H(+). It catalyses the reaction D-methionine(out) + ATP + H2O = D-methionine(in) + ADP + phosphate + H(+). Its function is as follows. Part of the ABC transporter complex MetNIQ involved in methionine import. Responsible for energy coupling to the transport system. In Sodalis glossinidius (strain morsitans), this protein is Methionine import ATP-binding protein MetN.